Here is a 450-residue protein sequence, read N- to C-terminus: 3-phosphoshikimate 1-carboxyvinyltransferase (450 aa).

3 residues coordinate 3-phosphoshikimate: K28, S29, and R33. Residue K28 coordinates phosphoenolpyruvate. Residues G100 and R128 each coordinate phosphoenolpyruvate. The 3-phosphoshikimate site is built by S173, Q175, D326, and K353. Q175 serves as a coordination point for phosphoenolpyruvate. D326 (proton acceptor) is an active-site residue. R357 and R402 together coordinate phosphoenolpyruvate.

Belongs to the EPSP synthase family. In terms of assembly, monomer.

It localises to the cytoplasm. The enzyme catalyses 3-phosphoshikimate + phosphoenolpyruvate = 5-O-(1-carboxyvinyl)-3-phosphoshikimate + phosphate. It participates in metabolic intermediate biosynthesis; chorismate biosynthesis; chorismate from D-erythrose 4-phosphate and phosphoenolpyruvate: step 6/7. Catalyzes the transfer of the enolpyruvyl moiety of phosphoenolpyruvate (PEP) to the 5-hydroxyl of shikimate-3-phosphate (S3P) to produce enolpyruvyl shikimate-3-phosphate and inorganic phosphate. The protein is 3-phosphoshikimate 1-carboxyvinyltransferase of Brucella abortus (strain S19).